The following is a 135-amino-acid chain: Lactoylglutathione lyase (135 aa).

Residues 2–126 (RLLHTMLRVG…DGYKIELIEE (125 aa)) enclose the VOC domain. Histidine 5 is a Ni(2+) binding site. Arginine 9 is a binding site for substrate. Glutamate 56 lines the Ni(2+) pocket. Residues asparagine 60 and histidine 74 each contribute to the substrate site. Ni(2+) contacts are provided by histidine 74 and glutamate 122. Residue glutamate 122 is the Proton donor/acceptor of the active site.

Belongs to the glyoxalase I family. As to quaternary structure, homodimer. Ni(2+) serves as cofactor.

It catalyses the reaction (R)-S-lactoylglutathione = methylglyoxal + glutathione. It functions in the pathway secondary metabolite metabolism; methylglyoxal degradation; (R)-lactate from methylglyoxal: step 1/2. Catalyzes the conversion of hemimercaptal, formed from methylglyoxal and glutathione, to S-lactoylglutathione. The chain is Lactoylglutathione lyase (gloA) from Escherichia coli O157:H7.